The following is a 239-amino-acid chain: Phosducin-like protein 3 (239 aa).

N-acetylmethionine is present on Met-1. In terms of domain architecture, Phosducin spans Glu-32–Gly-180. Phosphoserine is present on residues Ser-43, Ser-234, and Ser-236. Residues Phe-91–Asp-239 form a thioredoxin fold region.

It belongs to the phosducin family. As to quaternary structure, interacts (via thioredoxin fold region) with KDR/VEGFR2 (via juxtamembrane domain). Forms ternary complexes with the chaperonin CCT complex and actin substrate, leading to inhibition of actin folding. Interacts with XIAP (via BIR 3 and RING domain). Interacts with HSP90AA1 and HSP90AB1. Post-translationally, N-terminal methionine acetylation destabilizes the protein.

Its subcellular location is the cytoplasm. It is found in the perinuclear region. The protein resides in the endoplasmic reticulum. Functionally, acts as a chaperone for the angiogenic VEGF receptor KDR/VEGFR2, increasing its abundance by inhibiting its ubiquitination and degradation. Inhibits the folding activity of the chaperonin-containing T-complex (CCT) which leads to inhibition of cytoskeletal actin folding. Acts as a chaperone during heat shock alongside HSP90 and HSP40/70 chaperone complexes. Modulates the activation of caspases during apoptosis. The sequence is that of Phosducin-like protein 3 (PDCL3) from Pongo abelii (Sumatran orangutan).